We begin with the raw amino-acid sequence, 301 residues long: NADH-cytochrome b5 reductase 3 (301 aa).

Residue G2 is the site of N-myristoyl glycine attachment. The 113-residue stretch at 40 to 152 (DIKYPLRLID…RGPSGLLVYQ (113 aa)) folds into the FAD-binding FR-type domain. At K42 the chain carries N6-acetyllysine. Y43 is modified (phosphotyrosine). R92, P93, Y94, V109, K111, and F114 together coordinate FAD. At K120 the chain carries N6-acetyllysine. The FAD site is built by K126, M127, S128, and T185.

Belongs to the flavoprotein pyridine nucleotide cytochrome reductase family. In terms of assembly, component of a complex composed of cytochrome b5, NADH-cytochrome b5 reductase (CYB5R3) and MTARC2. Interacts with MTLN; the interaction is required to maintain cellular lipid composition and leads to stimulation of mitochondrial respiratory complex I activity. It depends on FAD as a cofactor. In terms of tissue distribution, expressed at late stages of erythroid maturation.

The protein localises to the endoplasmic reticulum membrane. Its subcellular location is the mitochondrion outer membrane. It localises to the cytoplasm. It carries out the reaction 2 Fe(III)-[cytochrome b5] + NADH = 2 Fe(II)-[cytochrome b5] + NAD(+) + H(+). Its function is as follows. Catalyzes the reduction of two molecules of cytochrome b5 using NADH as the electron donor. The sequence is that of NADH-cytochrome b5 reductase 3 from Homo sapiens (Human).